The sequence spans 406 residues: Ascaroside receptor GPR2 (406 aa).

At 1–29 (MTQLPYLLDRRGGALAAPATAWGDMMLNR) the chain is on the extracellular side. The chain crosses the membrane as a helical span at residues 30–50 (ALFSVALLSSVGSAWVVLSYA). Residues 51-61 (CIKELRSYRHQ) are Cytoplasmic-facing. A helical transmembrane segment spans residues 62–82 (LILGLAISDLLMSLNFMFSAG). The Extracellular segment spans residues 83-107 (WNVAGGDLALEESRTACSVNGFLTQ). C99 and C173 form a disulfide bridge. A helical transmembrane segment spans residues 108-128 (VFVVQTDWWILVIAIATYIIL). At 129–143 (GNFKTQSQFIQTHVW) the chain is on the cytoplasmic side. A helical membrane pass occupies residues 144–164 (IPWVGPWVLSIIIAAICHGVL). Over 165-185 (GYGYIGGWCWLTSDLMRLLIN) the chain is Extracellular. Residues 186 to 206 (FIPRWLIVIAIALIYIRLYMI) form a helical membrane-spanning segment. At 207-326 (VRKARKWDIE…AAQLKRIAKK (120 aa)) the chain is on the cytoplasmic side. A helical transmembrane segment spans residues 327 to 347 (MMVYPVAYAIIWACPTAIRIY). Residues 348 to 356 (QGTTGSRAP) are Extracellular-facing. Residues 357–377 (LWITIVDKSCIVIQGLVDAVV) form a helical membrane-spanning segment. Residues 378-406 (YGLNERAWQGWRDHIRRIIYKNEGGRIIG) lie on the Cytoplasmic side of the membrane.

This sequence belongs to the G-protein coupled receptor 1 family. Interacts with ascaroside receptor GPR3; may form a functional heterodimer. Interacts with guanine nucleotide-binding protein alpha GPA2; to activate adenylate cyclase and positively regulate nematode trap formation.

Its subcellular location is the cell membrane. Its function is as follows. G protein-coupled receptor that senses nematode ascaroside pheromones and signals via adenylate cyclase to positively regulate trap formation for nematode capture. This Arthrobotrys oligospora (strain ATCC 24927 / CBS 115.81 / DSM 1491) (Nematode-trapping fungus) protein is Ascaroside receptor GPR2.